Reading from the N-terminus, the 314-residue chain is DNA-directed RNA polymerase subunit alpha (314 aa).

The alpha N-terminal domain (alpha-NTD) stretch occupies residues 1–227; it reads MTKFEIECVE…ELLHPLKEIN (227 aa). An alpha C-terminal domain (alpha-CTD) region spans residues 241 to 314; that stretch reads KINQILIEEL…LPKEKTVKPN (74 aa).

The protein belongs to the RNA polymerase alpha chain family. As to quaternary structure, in plastids the minimal PEP RNA polymerase catalytic core is composed of four subunits: alpha, beta, beta', and beta''. When a (nuclear-encoded) sigma factor is associated with the core the holoenzyme is formed, which can initiate transcription.

Its subcellular location is the plastid. The protein localises to the chloroplast. The catalysed reaction is RNA(n) + a ribonucleoside 5'-triphosphate = RNA(n+1) + diphosphate. In terms of biological role, DNA-dependent RNA polymerase catalyzes the transcription of DNA into RNA using the four ribonucleoside triphosphates as substrates. The protein is DNA-directed RNA polymerase subunit alpha of Rhodomonas salina (Cryptomonas salina).